A 405-amino-acid polypeptide reads, in one-letter code: Magnesium-protoporphyrin IX monomethyl ester [oxidative] cyclase, chloroplastic (405 aa).

Residues 1–43 constitute a chloroplast transit peptide; the sequence is MATEMALVKPISKFSTSSPIFSNSRYGKFTTVRMSSTSQSTTK.

Belongs to the AcsF family. The cofactor is Fe cation.

The protein localises to the plastid. It is found in the chloroplast. It catalyses the reaction Mg-protoporphyrin IX 13-monomethyl ester + 3 NADPH + 3 O2 + 2 H(+) = 3,8-divinyl protochlorophyllide a + 3 NADP(+) + 5 H2O. The protein operates within porphyrin-containing compound metabolism; chlorophyll biosynthesis. In terms of biological role, catalyzes the formation of the isocyclic ring in chlorophyll biosynthesis. Mediates the cyclase reaction, which results in the formation of divinylprotochlorophyllide (Pchlide) characteristic of all chlorophylls from magnesium-protoporphyrin IX 13-monomethyl ester (MgPMME). The sequence is that of Magnesium-protoporphyrin IX monomethyl ester [oxidative] cyclase, chloroplastic (CRD1) from Gossypium hirsutum (Upland cotton).